A 244-amino-acid polypeptide reads, in one-letter code: tRNA (guanine-N(7)-)-methyltransferase (244 aa).

Glu-42, Asp-67, Asp-94, and Asp-116 together coordinate S-adenosyl-L-methionine. Asp-116 is a catalytic residue. Residues Lys-120, Asp-150, and 191–194 each bind substrate; that span reads TYYE.

The protein belongs to the class I-like SAM-binding methyltransferase superfamily. TrmB family.

The enzyme catalyses guanosine(46) in tRNA + S-adenosyl-L-methionine = N(7)-methylguanosine(46) in tRNA + S-adenosyl-L-homocysteine. The protein operates within tRNA modification; N(7)-methylguanine-tRNA biosynthesis. Its function is as follows. Catalyzes the formation of N(7)-methylguanine at position 46 (m7G46) in tRNA. The chain is tRNA (guanine-N(7)-)-methyltransferase from Porphyromonas gingivalis (strain ATCC BAA-308 / W83).